An 846-amino-acid chain; its full sequence is Aminopeptidase N (846 aa).

Residues glutamate 120 and 252 to 256 (GAMEN) each bind substrate. A Zn(2+)-binding site is contributed by histidine 288. The active-site Proton acceptor is the glutamate 289. The Zn(2+) site is built by histidine 292 and glutamate 311.

Belongs to the peptidase M1 family. Monomer. Zn(2+) is required as a cofactor.

It is found in the cytoplasm. It carries out the reaction Release of an N-terminal amino acid, Xaa-|-Yaa- from a peptide, amide or arylamide. Xaa is preferably Ala, but may be most amino acids including Pro (slow action). When a terminal hydrophobic residue is followed by a prolyl residue, the two may be released as an intact Xaa-Pro dipeptide.. Functionally, aminopeptidase with broad substrate specificity to several peptides. It has more affinity for oligopeptides than for dipeptides. It plays an essential role in the metabolism, it may be involved in nitrogen supply or protein turnover. In Lactococcus lactis subsp. cremoris (strain MG1363), this protein is Aminopeptidase N (pepN).